Consider the following 245-residue polypeptide: Ribosomal RNA large subunit methyltransferase E (245 aa).

Residues 1-26 (MTKPPVGSNRSGRKLGQKVKKGKLKA) form a disordered region. Residues 11–26 (SGRKLGQKVKKGKLKA) show a composition bias toward basic residues. S-adenosyl-L-methionine-binding residues include glycine 81, tryptophan 83, aspartate 104, aspartate 120, and aspartate 144. Lysine 184 serves as the catalytic Proton acceptor.

Belongs to the class I-like SAM-binding methyltransferase superfamily. RNA methyltransferase RlmE family.

Its subcellular location is the cytoplasm. It catalyses the reaction uridine(2552) in 23S rRNA + S-adenosyl-L-methionine = 2'-O-methyluridine(2552) in 23S rRNA + S-adenosyl-L-homocysteine + H(+). Functionally, specifically methylates the uridine in position 2552 of 23S rRNA at the 2'-O position of the ribose in the fully assembled 50S ribosomal subunit. This Sinorhizobium medicae (strain WSM419) (Ensifer medicae) protein is Ribosomal RNA large subunit methyltransferase E.